The primary structure comprises 303 residues: UDP-N-acetylenolpyruvoylglucosamine reductase (303 aa).

Residues 29 to 196 (KIGGPADILI…LEAVLQLEQK (168 aa)) enclose the FAD-binding PCMH-type domain. R174 is a catalytic residue. S225 (proton donor) is an active-site residue. Residue E295 is part of the active site.

This sequence belongs to the MurB family. FAD is required as a cofactor.

The protein localises to the cytoplasm. It carries out the reaction UDP-N-acetyl-alpha-D-muramate + NADP(+) = UDP-N-acetyl-3-O-(1-carboxyvinyl)-alpha-D-glucosamine + NADPH + H(+). Its pathway is cell wall biogenesis; peptidoglycan biosynthesis. Its function is as follows. Cell wall formation. The polypeptide is UDP-N-acetylenolpyruvoylglucosamine reductase (Bacillus velezensis (strain DSM 23117 / BGSC 10A6 / LMG 26770 / FZB42) (Bacillus amyloliquefaciens subsp. plantarum)).